Here is a 306-residue protein sequence, read N- to C-terminus: Olfactory receptor 8G17 (306 aa).

At methionine 1–phenylalanine 28 the chain is on the extracellular side. The N-linked (GlcNAc...) asparagine glycan is linked to asparagine 5. A helical transmembrane segment spans residues leucine 29–isoleucine 49. The Cytoplasmic portion of the chain corresponds to leucine 50 to histidine 56. The helical transmembrane segment at threonine 57–isoleucine 77 threads the bilayer. Residues threonine 78–cysteine 97 lie on the Extracellular side of the membrane. Residues isoleucine 98–methionine 118 form a helical membrane-spanning segment. Topologically, residues alanine 119–serine 143 are cytoplasmic. Residues leucine 144 to phenylalanine 164 traverse the membrane as a helical segment. At arginine 165–aspartate 196 the chain is on the extracellular side. The helical transmembrane segment at leucine 197 to serine 217 threads the bilayer. At tyrosine 218–lysine 236 the chain is on the cytoplasmic side. A helical membrane pass occupies residues alanine 237–phenylalanine 257. The Extracellular segment spans residues threonine 258–glycine 271. A helical membrane pass occupies residues lysine 272–leucine 292. Residues arginine 293–glutamate 306 lie on the Cytoplasmic side of the membrane.

Belongs to the G-protein coupled receptor 1 family.

It is found in the cell membrane. Odorant receptor. In Mus musculus (Mouse), this protein is Olfactory receptor 8G17.